The chain runs to 81 residues: MKTLLLTLVVVTIVCLDLGYTMTCCNQQSSQPKTTTNCAESSCYKKTWSDHRGTRIERGCGCPQVKRGIKLECCHTNECNN.

An N-terminal signal peptide occupies residues 1-21; sequence MKTLLLTLVVVTIVCLDLGYT. Disulfide bonds link C24-C43, C38-C60, C62-C73, and C74-C79.

The protein belongs to the three-finger toxin family. Short-chain subfamily. Type I alpha-neurotoxin sub-subfamily. In terms of tissue distribution, expressed by the venom gland.

The protein localises to the secreted. Its function is as follows. Binds to muscle nicotinic acetylcholine receptor (nAChR) and inhibit acetylcholine from binding to the receptor, thereby impairing neuromuscular transmission. The polypeptide is Short neurotoxin SN160 (Hydrophis hardwickii (Hardwick's spine-bellied seasnake)).